The primary structure comprises 39 residues: RapF inhibitor (39 aa).

A propeptide spanning residues Met-1–Ala-34 is cleaved from the precursor.

This sequence belongs to the Phr family. In terms of assembly, interacts with RapF and inhibits its interaction with ComA. In terms of processing, contains a predicted signal peptide cleavage site in the N-terminal region, however the propeptide is probably subject to only one processing event, at the N-terminal end of the mature peptide.

Its subcellular location is the secreted. The protein resides in the cytoplasm. Signaling molecule involved in the regulation of genetic competence development. Secreted during production, but the mature peptide acts intracellularly, indicating that it needs to be imported into the cell to function. Stimulates expression of the genes controlled by ComA, a transcriptional factor that regulates the development of genetic competence. Acts by inhibiting RapF, which regulates the activity of ComA. This Bacillus subtilis (strain 168) protein is RapF inhibitor (phrF).